The primary structure comprises 301 residues: uncharacterized protein (301 aa).

Glutamate 146, glutamate 148, and aspartate 177 together coordinate a divalent metal cation.

The protein belongs to the FAH family.

This is an uncharacterized protein from Staphylococcus saprophyticus subsp. saprophyticus (strain ATCC 15305 / DSM 20229 / NCIMB 8711 / NCTC 7292 / S-41).